The primary structure comprises 142 residues: Universal stress protein D (142 aa).

The protein belongs to the universal stress protein A family.

Its subcellular location is the cytoplasm. Functionally, required for resistance to DNA-damaging agents. In Escherichia coli O157:H7, this protein is Universal stress protein D (uspD).